A 239-amino-acid polypeptide reads, in one-letter code: 7-cyano-7-deazaguanine synthase (239 aa).

Position 8 to 18 (8 to 18) interacts with ATP; it reads FSGGLDSTASL. Zn(2+) contacts are provided by Cys194, Cys209, Cys212, and Cys215.

Belongs to the QueC family.

It carries out the reaction 7-carboxy-7-deazaguanine + NH4(+) + ATP = 7-cyano-7-deazaguanine + ADP + phosphate + H2O + H(+). The protein operates within purine metabolism; 7-cyano-7-deazaguanine biosynthesis. Functionally, catalyzes the ATP-dependent conversion of 7-carboxy-7-deazaguanine (CDG) to 7-cyano-7-deazaguanine (preQ(0)). The polypeptide is 7-cyano-7-deazaguanine synthase (Pyrococcus abyssi (strain GE5 / Orsay)).